A 347-amino-acid chain; its full sequence is Olfactory receptor 6J1 (347 aa).

Residues 1 to 24 (MGNWTAAVTEFVLLGFSLSREVEL) lie on the Extracellular side of the membrane. An N-linked (GlcNAc...) asparagine glycan is attached at Asn-3. Residues 25–45 (LLLVLLLPTFLLTLLGNLLII) traverse the membrane as a helical segment. Topologically, residues 46–53 (STVLSCSR) are cytoplasmic. A helical membrane pass occupies residues 54–74 (LHTPMYFFLCNLSILDILFTS). Residues 75-98 (VISPKVLANLGSRDKTISFAGCIT) are Extracellular-facing. An intrachain disulfide couples Cys-96 to Cys-188. Residues 99 to 119 (QCYFYFFLGTVEFLLLTVMSY) form a helical membrane-spanning segment. The Cytoplasmic segment spans residues 120 to 138 (DRYATICCPLRYTTIMRPS). The helical transmembrane segment at 139 to 159 (VCIGTVVFSWVGGFLSVLFPT) threads the bilayer. The Extracellular portion of the chain corresponds to 160-196 (ILISQLPFCGSNIINHFFCDSGPLLALACADTTAIEL). A helical transmembrane segment spans residues 197–216 (MDFMLSSMVILCCIVLVAYS). The Cytoplasmic segment spans residues 217–236 (YTYIILTIVRIPSASGRKKA). The helical transmembrane segment at 237–257 (FNTCASHLTIVIISSGITVFI) threads the bilayer. Over 258 to 270 (YVTPSQKEYLEIN) the chain is Extracellular. The helical transmembrane segment at 271-291 (KIPLVLSSVVTPFLNPFIYTL) threads the bilayer. Residues 292–347 (RNDTVQGVLRDVWVRVRGVFEKRMRAVLRSRLSSNKDHQGRACSSPPCVYSVKLQC) are Cytoplasmic-facing.

It belongs to the G-protein coupled receptor 1 family.

It localises to the cell membrane. Odorant receptor. The sequence is that of Olfactory receptor 6J1 (OR6J1) from Homo sapiens (Human).